A 429-amino-acid polypeptide reads, in one-letter code: Histidine--tRNA ligase (429 aa).

It belongs to the class-II aminoacyl-tRNA synthetase family. Homodimer.

Its subcellular location is the cytoplasm. It carries out the reaction tRNA(His) + L-histidine + ATP = L-histidyl-tRNA(His) + AMP + diphosphate + H(+). In Chlorobium phaeobacteroides (strain DSM 266 / SMG 266 / 2430), this protein is Histidine--tRNA ligase.